A 729-amino-acid polypeptide reads, in one-letter code: Fatty acid oxidation complex subunit alpha (729 aa).

An enoyl-CoA hydratase/isomerase region spans residues 1 to 189 (MLYKGDTLYL…KIGLVDGVVK (189 aa)). Aspartate 296 contacts substrate. Residues 311 to 729 (ETPKQAAVLG…ARPVGSLKTA (419 aa)) form a 3-hydroxyacyl-CoA dehydrogenase region. Residues methionine 324, aspartate 343, 400-402 (VVE), lysine 407, and serine 429 each bind NAD(+). Histidine 450 serves as the catalytic For 3-hydroxyacyl-CoA dehydrogenase activity. NAD(+) is bound at residue asparagine 453. Residues asparagine 500 and tyrosine 660 each coordinate substrate. The disordered stretch occupies residues 708 to 729 (RHNEPYYPPVEPARPVGSLKTA).

In the N-terminal section; belongs to the enoyl-CoA hydratase/isomerase family. The protein in the C-terminal section; belongs to the 3-hydroxyacyl-CoA dehydrogenase family. As to quaternary structure, heterotetramer of two alpha chains (FadB) and two beta chains (FadA).

The enzyme catalyses a (3S)-3-hydroxyacyl-CoA + NAD(+) = a 3-oxoacyl-CoA + NADH + H(+). The catalysed reaction is a (3S)-3-hydroxyacyl-CoA = a (2E)-enoyl-CoA + H2O. It carries out the reaction a 4-saturated-(3S)-3-hydroxyacyl-CoA = a (3E)-enoyl-CoA + H2O. It catalyses the reaction (3S)-3-hydroxybutanoyl-CoA = (3R)-3-hydroxybutanoyl-CoA. The enzyme catalyses a (3Z)-enoyl-CoA = a 4-saturated (2E)-enoyl-CoA. The catalysed reaction is a (3E)-enoyl-CoA = a 4-saturated (2E)-enoyl-CoA. It functions in the pathway lipid metabolism; fatty acid beta-oxidation. Involved in the aerobic and anaerobic degradation of long-chain fatty acids via beta-oxidation cycle. Catalyzes the formation of 3-oxoacyl-CoA from enoyl-CoA via L-3-hydroxyacyl-CoA. It can also use D-3-hydroxyacyl-CoA and cis-3-enoyl-CoA as substrate. The polypeptide is Fatty acid oxidation complex subunit alpha (Salmonella choleraesuis (strain SC-B67)).